We begin with the raw amino-acid sequence, 158 residues long: 2-C-methyl-D-erythritol 2,4-cyclodiphosphate synthase (158 aa).

Residues D8 and H10 each contribute to the a divalent metal cation site. 4-CDP-2-C-methyl-D-erythritol 2-phosphate-binding positions include D8–H10 and H34–S35. A divalent metal cation is bound at residue H42. Residues D56–G58, T132–E135, and R142 each bind 4-CDP-2-C-methyl-D-erythritol 2-phosphate.

This sequence belongs to the IspF family. In terms of assembly, homotrimer. It depends on a divalent metal cation as a cofactor.

It carries out the reaction 4-CDP-2-C-methyl-D-erythritol 2-phosphate = 2-C-methyl-D-erythritol 2,4-cyclic diphosphate + CMP. Its pathway is isoprenoid biosynthesis; isopentenyl diphosphate biosynthesis via DXP pathway; isopentenyl diphosphate from 1-deoxy-D-xylulose 5-phosphate: step 4/6. Functionally, involved in the biosynthesis of isopentenyl diphosphate (IPP) and dimethylallyl diphosphate (DMAPP), two major building blocks of isoprenoid compounds. Catalyzes the conversion of 4-diphosphocytidyl-2-C-methyl-D-erythritol 2-phosphate (CDP-ME2P) to 2-C-methyl-D-erythritol 2,4-cyclodiphosphate (ME-CPP) with a corresponding release of cytidine 5-monophosphate (CMP). This is 2-C-methyl-D-erythritol 2,4-cyclodiphosphate synthase from Nitrosococcus oceani (strain ATCC 19707 / BCRC 17464 / JCM 30415 / NCIMB 11848 / C-107).